Here is a 318-residue protein sequence, read N- to C-terminus: Aspartate carbamoyltransferase catalytic subunit (318 aa).

Positions 58 and 59 each coordinate carbamoyl phosphate. K86 is a binding site for L-aspartate. 3 residues coordinate carbamoyl phosphate: R108, H141, and Q144. R174 and R226 together coordinate L-aspartate. 2 residues coordinate carbamoyl phosphate: G270 and P271.

The protein belongs to the aspartate/ornithine carbamoyltransferase superfamily. ATCase family. Heterododecamer (2C3:3R2) of six catalytic PyrB chains organized as two trimers (C3), and six regulatory PyrI chains organized as three dimers (R2).

It catalyses the reaction carbamoyl phosphate + L-aspartate = N-carbamoyl-L-aspartate + phosphate + H(+). The protein operates within pyrimidine metabolism; UMP biosynthesis via de novo pathway; (S)-dihydroorotate from bicarbonate: step 2/3. Its function is as follows. Catalyzes the condensation of carbamoyl phosphate and aspartate to form carbamoyl aspartate and inorganic phosphate, the committed step in the de novo pyrimidine nucleotide biosynthesis pathway. The sequence is that of Aspartate carbamoyltransferase catalytic subunit from Lactobacillus delbrueckii subsp. bulgaricus (strain ATCC BAA-365 / Lb-18).